The primary structure comprises 242 residues: MYKRPRFNRVLLKLSGEVLMGPGQFGIDPATVARVADEIRAAREAGYQLCIVVGGGNIFRGLAATARGIERSSADYMGMLATVMNAIAVQNALENLGVDTRVQSAIPMPTVCEPFIRRRAERHMEKGRVVIFAAGTGNPFFTTDSGAALRAAEMKCDALFKGTSVDGVYDADPKKVKEARRYDCVSFNRVLADDLKVMDASATALCRDNNIPIVVFNIREQGNFSRVLKGDGVSTIVCNEEE.

Residue 13-16 participates in ATP binding; sequence KLSG. Gly-55 lines the UMP pocket. Residues Gly-56 and Arg-60 each contribute to the ATP site. Residues Asp-75 and 136 to 143 each bind UMP; that span reads TGNPFFTT. Residues Thr-163, Tyr-169, and Asp-172 each contribute to the ATP site.

This sequence belongs to the UMP kinase family. In terms of assembly, homohexamer.

The protein resides in the cytoplasm. It carries out the reaction UMP + ATP = UDP + ADP. The protein operates within pyrimidine metabolism; CTP biosynthesis via de novo pathway; UDP from UMP (UMPK route): step 1/1. Inhibited by UTP. Functionally, catalyzes the reversible phosphorylation of UMP to UDP. This is Uridylate kinase from Zymomonas mobilis subsp. mobilis (strain ATCC 31821 / ZM4 / CP4).